The chain runs to 177 residues: Nuclear export protein (177 aa).

2 short sequence motifs (nuclear export signal) span residues 91–100 (LWLPMKSLSL) and 117–127 (MKHQILTRLKL).

Binds M1 protein. May interact with human nucleoporins and exportin XPO1/CRM1.

It localises to the virion. The protein resides in the host nucleus. Its function is as follows. Mediates the nuclear export of encapsidated genomic RNAs (ribonucleoproteins, RNPs). Acts as an adapter between viral RNPs complexes and the nuclear export machinery of the cell. Possesses no intrinsic RNA-binding activity, but includes a C-terminal M1-binding domain. This domain is believed to allow recognition of RNPs to which the M1 protein is bound. Because the M1 protein is not available in large quantities until the later stages of infection, such an indirect recognition mechanism probably ensures that genomic RNPs are not exported from the nucleus before sufficient quantities of viral mRNA and progeny genomic RNA have been synthesized. Furthermore, the RNPs enters the cytoplasm only when they have associated with the M1 protein that is necessary to guide them to the plasma membrane. May down-regulate viral RNA synthesis when overproduced. The chain is Nuclear export protein (NS) from Homo sapiens (Human).